A 392-amino-acid polypeptide reads, in one-letter code: Protein O-glucosyltransferase 1 (392 aa).

Residues 1–23 (MELGVSSQLWLWLLLLLLPPVPG) form the signal peptide. Intrachain disulfides connect cysteine 49–cysteine 56, cysteine 54–cysteine 357, cysteine 102–cysteine 108, and cysteine 263–cysteine 286. A glycan (N-linked (GlcNAc...) asparagine) is linked at asparagine 53. The interaction with the consensus sequence C-X-S-X-[PA]-C in peptide substrates stretch occupies residues 103–107 (MFPSR). The Proton donor/acceptor role is filled by aspartate 133. The interval 172 to 178 (AVWPIYP) is interaction with the consensus sequence C-X-S-X-[PA]-C in peptide substrates. Residue tyrosine 177 participates in UDP-alpha-D-glucose binding. Asparagine 204 carries an N-linked (GlcNAc...) asparagine glycan. UDP-alpha-D-glucose contacts are provided by residues serine 212, arginine 218, and 274-279 (VAASFR). A glycan (N-linked (GlcNAc...) asparagine) is linked at asparagine 373. Residues 389-392 (KIEL) carry the Prevents secretion from ER motif.

The protein belongs to the glycosyltransferase 90 family.

Its subcellular location is the endoplasmic reticulum lumen. The enzyme catalyses L-seryl-[EGF-like domain protein] + UDP-alpha-D-xylose = 3-O-(beta-D-xylosyl)-L-seryl-[EGF-like domain protein] + UDP + H(+). The catalysed reaction is L-seryl-[EGF-like domain protein] + UDP-alpha-D-glucose = 3-O-(beta-D-glucosyl)-L-seryl-[EGF-like domain protein] + UDP + H(+). It participates in protein modification; protein glycosylation. In terms of biological role, dual specificity glycosyltransferase that catalyzes the transfer of glucose and xylose from UDP-glucose and UDP-xylose, respectively, to a serine residue found in the consensus sequence of C-X-S-X-P-C. Specifically targets extracellular EGF repeats of protein such as CRB2, F7, F9 and NOTCH2. Acts as a positive regulator of Notch signaling by mediating O-glucosylation of Notch, leading to regulate muscle development. Notch glucosylation does not affect Notch ligand binding. Required during early development to promote gastrulation: acts by mediating O-glucosylation of CRB2, which is required for CRB2 localization to the cell membrane. This is Protein O-glucosyltransferase 1 (POGLUT1) from Bos taurus (Bovine).